The sequence spans 371 residues: Aminomethyltransferase (371 aa).

Belongs to the GcvT family. The glycine cleavage system is composed of four proteins: P, T, L and H.

The enzyme catalyses N(6)-[(R)-S(8)-aminomethyldihydrolipoyl]-L-lysyl-[protein] + (6S)-5,6,7,8-tetrahydrofolate = N(6)-[(R)-dihydrolipoyl]-L-lysyl-[protein] + (6R)-5,10-methylene-5,6,7,8-tetrahydrofolate + NH4(+). Functionally, the glycine cleavage system catalyzes the degradation of glycine. The polypeptide is Aminomethyltransferase (Cellvibrio japonicus (strain Ueda107) (Pseudomonas fluorescens subsp. cellulosa)).